A 126-amino-acid polypeptide reads, in one-letter code: Putative lipoprotein LprD (126 aa).

An N-terminal signal peptide occupies residues 1–21 (MSTTRRRRPALIALVIIATCG). C22 carries the N-palmitoyl cysteine lipid modification. C22 carries the S-diacylglycerol cysteine lipid modification. A helical membrane pass occupies residues 40-60 (FQNLGYALQWPLFAWFCVYAY). Residues 70 to 101 (PPQPPTGGAAAEIPAGLLPERPKPAQQPPDDP) form a disordered region.

It to M.leprae ML1177.

Its subcellular location is the cell membrane. The protein is Putative lipoprotein LprD (lprD) of Mycobacterium tuberculosis (strain CDC 1551 / Oshkosh).